The primary structure comprises 110 residues: Large ribosomal subunit protein uL22 (110 aa).

It belongs to the universal ribosomal protein uL22 family. As to quaternary structure, part of the 50S ribosomal subunit.

Functionally, this protein binds specifically to 23S rRNA; its binding is stimulated by other ribosomal proteins, e.g. L4, L17, and L20. It is important during the early stages of 50S assembly. It makes multiple contacts with different domains of the 23S rRNA in the assembled 50S subunit and ribosome. In terms of biological role, the globular domain of the protein is located near the polypeptide exit tunnel on the outside of the subunit, while an extended beta-hairpin is found that lines the wall of the exit tunnel in the center of the 70S ribosome. In Nitrosomonas europaea (strain ATCC 19718 / CIP 103999 / KCTC 2705 / NBRC 14298), this protein is Large ribosomal subunit protein uL22.